A 421-amino-acid polypeptide reads, in one-letter code: Expansin-like protein DDB_G0293186 (421 aa).

Positions 1-20 (MRTLKLIILLILSTFKTINS) are cleaved as a signal peptide. N-linked (GlcNAc...) asparagine glycosylation occurs at Asn19. Residues 43–139 (GGQCGLPLPG…QKVSCGFSGY (97 aa)) form the Expansin-like EG45 domain. Disulfide bonds link Cys46-Cys70 and Cys73-Cys134. Residues Asn117 and Asn391 are each glycosylated (N-linked (GlcNAc...) asparagine).

Belongs to the expansin family. Expansin A subfamily.

It localises to the secreted. Its function is as follows. May serve to lubricate the movement of the cellulose microfibrils during cell growth and wall extension and/or may serve to maintain the fluid state of the slug cell wall. This is Expansin-like protein DDB_G0293186 from Dictyostelium discoideum (Social amoeba).